A 633-amino-acid polypeptide reads, in one-letter code: Chaperone protein DnaK (633 aa).

Thr198 is subject to Phosphothreonine; by autocatalysis.

The protein belongs to the heat shock protein 70 family.

Its function is as follows. Acts as a chaperone. This is Chaperone protein DnaK from Rhodopseudomonas palustris (strain HaA2).